We begin with the raw amino-acid sequence, 142 residues long: Ribosome-binding factor A (142 aa).

Residues 119–142 form a disordered region; that stretch reads EAKQKQHGVETDAEQGDTKEEGDK.

It belongs to the RbfA family. Monomer. Binds 30S ribosomal subunits, but not 50S ribosomal subunits or 70S ribosomes.

The protein localises to the cytoplasm. Functionally, one of several proteins that assist in the late maturation steps of the functional core of the 30S ribosomal subunit. Associates with free 30S ribosomal subunits (but not with 30S subunits that are part of 70S ribosomes or polysomes). Required for efficient processing of 16S rRNA. May interact with the 5'-terminal helix region of 16S rRNA. This chain is Ribosome-binding factor A, found in Shewanella pealeana (strain ATCC 700345 / ANG-SQ1).